Consider the following 339-residue polypeptide: NADH-quinone oxidoreductase subunit H (339 aa).

8 helical membrane-spanning segments follow: residues 9-29 (IFPL…LILC), 82-102 (ILFV…WAVI), 115-135 (VGVL…IIAG), 161-181 (MGLV…SQIV), 187-207 (MPWW…ISVL), 235-255 (MGFA…SAMT), 275-295 (IPGF…FLWI), and 311-331 (GWKV…SVLI).

This sequence belongs to the complex I subunit 1 family. NDH-1 is composed of 14 different subunits. Subunits NuoA, H, J, K, L, M, N constitute the membrane sector of the complex.

Its subcellular location is the cell inner membrane. It carries out the reaction a quinone + NADH + 5 H(+)(in) = a quinol + NAD(+) + 4 H(+)(out). In terms of biological role, NDH-1 shuttles electrons from NADH, via FMN and iron-sulfur (Fe-S) centers, to quinones in the respiratory chain. The immediate electron acceptor for the enzyme in this species is believed to be ubiquinone. Couples the redox reaction to proton translocation (for every two electrons transferred, four hydrogen ions are translocated across the cytoplasmic membrane), and thus conserves the redox energy in a proton gradient. This subunit may bind ubiquinone. This chain is NADH-quinone oxidoreductase subunit H, found in Rickettsia bellii (strain OSU 85-389).